The following is a 59-amino-acid chain: Large ribosomal subunit protein bL32 (59 aa).

The segment covering 1–16 (MAVPKRKTSPSRRGMR) has biased composition (basic residues). Residues 1–20 (MAVPKRKTSPSRRGMRRSHD) are disordered.

The protein belongs to the bacterial ribosomal protein bL32 family.

The sequence is that of Large ribosomal subunit protein bL32 from Novosphingobium aromaticivorans (strain ATCC 700278 / DSM 12444 / CCUG 56034 / CIP 105152 / NBRC 16084 / F199).